A 152-amino-acid polypeptide reads, in one-letter code: Large-conductance mechanosensitive channel (152 aa).

A run of 3 helical transmembrane segments spans residues 21-41, 44-64, and 92-112; these read IDLAVGVIIGAAFGKIVDSLV, VVMPLVNFILGGSVDFSNKFL, and GNFITIIINFVLLAFVIFWMV.

It belongs to the MscL family. As to quaternary structure, homopentamer.

It is found in the cell inner membrane. Channel that opens in response to stretch forces in the membrane lipid bilayer. May participate in the regulation of osmotic pressure changes within the cell. In Bordetella bronchiseptica (strain ATCC BAA-588 / NCTC 13252 / RB50) (Alcaligenes bronchisepticus), this protein is Large-conductance mechanosensitive channel.